Reading from the N-terminus, the 576-residue chain is Arginine--tRNA ligase (576 aa).

Residues 132-142 (ANPTGPMHIGH) carry the 'HIGH' region motif.

This sequence belongs to the class-I aminoacyl-tRNA synthetase family. In terms of assembly, monomer.

It localises to the cytoplasm. It carries out the reaction tRNA(Arg) + L-arginine + ATP = L-arginyl-tRNA(Arg) + AMP + diphosphate. The chain is Arginine--tRNA ligase from Ehrlichia ruminantium (strain Gardel).